The primary structure comprises 517 residues: MLALLLSPYGAYLGLALLVLYYLLPYLKRAHLRDIPAPGLAAFTNFWLLLQTRRGHRFVVVDNAHKKYGKLVRIAPRHTSIADDGAIQAVYGHGNGFLKSDFYDAFVSIHRGLFNTRDRAEHTRKRKTVSHTFSMKSIGQFEQYIHGNIELFVKQWNRMADTQRNPKTGFASLDALNWFNYLAFDIIGDLAFGAPFGMLDKGKDFAEMRKTPDSPPSYVQAVEVLNRRGEVSATLGCYPALKPFAKYLPDSFFRDGIQAVEDLAGIAVARVNERLRPEVMANNTRVDLLARLMEGKDSNGEKLGRAELTAEALTQLIAGSDTTSNTSCAILYWCMRTPGVIEKLHKALDEAIPQDVDVPTHAMVKDIPYLQWVIWETMRIHSTSAMGLPREIPAGNPPVTISGHTFYPGDVVSVPSYTIHRSKEIWGPDAEQFVPERWDPARLTPRQKAAFIPFSTGPRACVGRNVAEMELLVICGTVFRLFEFEMQQEGPMETREGFLRKPLGLQVGMKRRQPGSA.

Residues 4–24 (LLLSPYGAYLGLALLVLYYLL) traverse the membrane as a helical segment. Residues Asn282 and Asn325 are each glycosylated (N-linked (GlcNAc...) asparagine). Residue Cys461 coordinates heme.

It belongs to the cytochrome P450 family. It depends on heme as a cofactor.

The protein localises to the membrane. It carries out the reaction benzoate + reduced [NADPH--hemoprotein reductase] + O2 = 4-hydroxybenzoate + oxidized [NADPH--hemoprotein reductase] + H2O + H(+). Cytochrome P450 monooxygenase; part of the benzoic acid degradation pathway also known as the protocatechuic acid pathway. Benzoic acid debradation begins with the conversion of benzoic acid into 4-hydroxybenzoic acid through hydroxylation by the benzoate-4-monooxygenase bphA, and its partner NADPH-cytochrome P450 reductase cprA which act as a mediator in electron donation from NADPH. 4-Hydroxybenzoic acid is then converted into 3,4-dihydroxybenzoic acid (also called protocatechuic acid) by the p-hydroxybenzoate-m-hydroxylase phhA. Protocatechuic acid is converted into 3-carboxy-cis,cis-muconic acid by the intradiol ring-cleavage dioxygenase prcA, which is further metabolized through the 3-oxoadipate pathway to finally enter the tricarboxylic acid cycle (TCA). Functionally, responsible for cytochrome P450 dependent benzoate hydroxylation in microsomes; requires cprA as the mediator in electron donation from NADPH. This Aspergillus niger protein is Benzoate 4-monooxygenase bphA.